Reading from the N-terminus, the 688-residue chain is Translation initiation factor IF-2 (688 aa).

2 stretches are compositionally biased toward basic and acidic residues: residues 53–62 (GKEKSEKTKE) and 86–95 (KRDDKNEKVN). The tract at residues 53–100 (GKEKSEKTKEEDDEIETTAKNPIKESMNNKKSNKRDDKNEKVNTENAE) is disordered. Positions 187–354 (KRSPIITVMG…MILLSSEILE (168 aa)) constitute a tr-type G domain. The G1 stretch occupies residues 196 to 203 (GHVDHGKT). Residue 196 to 203 (GHVDHGKT) participates in GTP binding. A G2 region spans residues 221 to 225 (GITQH). The interval 242–245 (DTPG) is G3. GTP is bound by residues 242 to 246 (DTPGH) and 296 to 299 (NKID). The tract at residues 296–299 (NKID) is G4. Residues 332–334 (SAH) are G5.

It belongs to the TRAFAC class translation factor GTPase superfamily. Classic translation factor GTPase family. IF-2 subfamily.

The protein resides in the cytoplasm. Its function is as follows. One of the essential components for the initiation of protein synthesis. Protects formylmethionyl-tRNA from spontaneous hydrolysis and promotes its binding to the 30S ribosomal subunits. Also involved in the hydrolysis of GTP during the formation of the 70S ribosomal complex. This chain is Translation initiation factor IF-2, found in Clostridium botulinum (strain ATCC 19397 / Type A).